Here is a 309-residue protein sequence, read N- to C-terminus: Dicarboxylate carrier UCP2 (309 aa).

Residues 1–16 are Mitochondrial intermembrane-facing; that stretch reads MVGFKATDVPPTATVK. 3 Solcar repeats span residues 11–106, 114–203, and 212–297; these read PTAT…VKQF, ASIG…IKDA, and DDLP…LKRA. The interval 16-63 is important for interaction with long-chain fatty acids; it reads KFLGAGTAACIADLITFPLDTAKVRLQIQGESQGPVHATASAQYRGVM. A helical transmembrane segment spans residues 17-40; the sequence is FLGAGTAACIADLITFPLDTAKVR. Topologically, residues 41 to 77 are mitochondrial matrix; it reads LQIQGESQGPVHATASAQYRGVMGTILTMVRTEGPRS. A helical transmembrane segment spans residues 78–103; the sequence is LYNGLVAGLQRQMSFASVRIGLYDSV. At 104–119 the chain is on the mitochondrial intermembrane side; that stretch reads KQFYTKGSEHASIGSR. A helical transmembrane segment spans residues 120 to 145; that stretch reads LLAGSTTGALAVAVAQPTDVVKVRFQ. At 146–173 the chain is on the mitochondrial matrix side; it reads AQARAGGGRRYQSTVNAYKTIAREEGFR. The helical transmembrane segment at 174 to 199 threads the bilayer; the sequence is GLWKGTSPNVARNAIVNCAELVTYDL. The Mitochondrial intermembrane portion of the chain corresponds to 200 to 217; sequence IKDALLKANLMTDDLPCH. The chain crosses the membrane as a helical span at residues 218-242; the sequence is FTSAFGAGFCTTVIASPVDVVKTRY. Over 243-268 the chain is Mitochondrial matrix; that stretch reads MNSALGQYSSAGHCALTMLQKEGPRA. Residues 269-294 traverse the membrane as a helical segment; that stretch reads FYKGFMPSFLRLGSWNVVMFVTYEQL. The segment at 278-285 is important for interaction with long-chain fatty acids; sequence LRLGSWNV. At 295-309 the chain is on the mitochondrial intermembrane side; it reads KRALMAACTSREAPF.

It belongs to the mitochondrial carrier (TC 2.A.29) family. As to quaternary structure, homotetramer. Adopts an asymmetrical dimer of dimers functional form. Interacts with MICU1 (when methylated); leading to decrease the calcium sensitivity of MICU1.

The protein resides in the mitochondrion inner membrane. It catalyses the reaction L-aspartate(out) + phosphate(in) + H(+)(in) = L-aspartate(in) + phosphate(out) + H(+)(out). The catalysed reaction is oxaloacetate(out) + phosphate(in) + H(+)(in) = oxaloacetate(in) + phosphate(out) + H(+)(out). It carries out the reaction (S)-malate(out) + phosphate(in) + H(+)(in) = (S)-malate(in) + phosphate(out) + H(+)(out). The enzyme catalyses malonate(out) + phosphate(in) + H(+)(in) = malonate(in) + phosphate(out) + H(+)(out). It catalyses the reaction sulfate(out) + phosphate(in) + H(+)(in) = sulfate(in) + phosphate(out) + H(+)(out). The catalysed reaction is (S)-malate(out) = (S)-malate(in). It carries out the reaction L-aspartate(out) = L-aspartate(in). The enzyme catalyses phosphate(in) = phosphate(out). It catalyses the reaction chloride(in) = chloride(out). The catalysed reaction is H(+)(in) = H(+)(out). It carries out the reaction a long-chain fatty acid(out) = a long-chain fatty acid(in). Its function is as follows. Antiporter that exports dicarboxylate intermediates of the Krebs cycle in exchange for phosphate plus a proton across the inner membrane of mitochondria, a process driven by mitochondrial motive force with an overall impact on glycolysis, glutaminolysis and glutathione-dependent redox balance. Continuous export of oxaloacetate and related four-carbon dicarboxylates from mitochondrial matrix into the cytosol negatively regulates the oxidation of acetyl-CoA substrates via the Krebs cycle lowering the ATP/ADP ratio and reactive oxygen species (ROS) production. May mediate inducible proton entry into the mitochondrial matrix affecting ATP turnover as a protection mechanism against oxidative stress. The proton currents are most likely associated with fatty acid flipping across the inner membrane of mitochondria in a metabolic process regulated by free fatty acids and purine nucleotides. Regulates the use of glucose as a source of energy. Required for glucose-induced DRP1-dependent mitochondrial fission and neuron activation in the ventromedial nucleus of the hypothalamus (VMH). This mitochondrial adaptation mechanism modulates the VMH pool of glucose-excited neurons with an impact on systemic glucose homeostasis. Regulates ROS levels and metabolic reprogramming of macrophages during the resolution phase of inflammation. Attenuates ROS production in response to IL33 to preserve the integrity of the Krebs cycle required for persistent production of itaconate and subsequent GATA3-dependent differentiation of inflammation-resolving alternatively activated macrophages. Can unidirectionally transport anions including L-malate, L-aspartate, phosphate and chloride ions. Does not mediate adaptive thermogenesis. The chain is Dicarboxylate carrier UCP2 (UCP2) from Pongo abelii (Sumatran orangutan).